The following is a 519-amino-acid chain: Dolichol kinase (519 aa).

Topologically, residues 1–47 (MVAIIPHASFTTIKLTQKTEGSQMPTEEICKINMRTRKFDVGGNSRD) are cytoplasmic. Residues 48–68 (FECFYSNFVQTVILLGTFFYC) traverse the membrane as a helical segment. Residues 69–88 (VERLQPWSIVTADISYKQIF) lie on the Lumenal side of the membrane. The helical transmembrane segment at 89-109 (VNVFVVCLIMVGLIFTKYWQH) threads the bilayer. The Cytoplasmic segment spans residues 110 to 118 (GYKSLPKFD). The helical transmembrane segment at 119–139 (TIYSLYLPFMVSLLFDTSSTV) threads the bilayer. At 140 to 151 (INTILILSVLNS) the chain is on the lumenal side. Residues 152-172 (YRWRTQLVVIILQLCLIFFNF) traverse the membrane as a helical segment. At 173-181 (EAGDRLKNI) the chain is on the cytoplasmic side. Residues 182 to 203 (ISIVINSLLSLILKYIGQLKSL) form a helical membrane-spanning segment. The Lumenal portion of the chain corresponds to 204–223 (DNIDSNLFSILLTNILYVSE). Residues 224–244 (AGTVHFRILKGIILALTTIIS) traverse the membrane as a helical segment. Residues 245 to 253 (INYVLKKVM) lie on the Cytoplasmic side of the membrane. A helical membrane pass occupies residues 254 to 274 (HFKPFMLSISFAIGLPLFANT). Residues 275–294 (FIHLEDGENPLLWLVKYILE) are Lumenal-facing. Residues 295–315 (STIRQKILFAWSSILILSIPS) form a helical membrane-spanning segment. The Cytoplasmic portion of the chain corresponds to 316–326 (ILIEKDSLSLN). The helical transmembrane segment at 327–347 (TSRKLWHFIIFLLIIPSFQMD) threads the bilayer. Residues 348 to 349 (SN) are Lumenal-facing. Residues 350–370 (FVKIALSGTIPVFLSIEYIRF) form a helical membrane-spanning segment. The Cytoplasmic portion of the chain corresponds to 371–394 (QNLPPLGSAIELQLRRFADDRDHS). A helical membrane pass occupies residues 395-415 (GPLIISYLYLLFGISTPLLMN). Residues 416 to 417 (NS) are Lumenal-facing. A helical membrane pass occupies residues 418–438 (PMGLIGLGIGDSLASIIGKRY). At 439–449 (GRIRWKGTQKT) the chain is on the cytoplasmic side. Residues 450–470 (LEGTLAFIVTSFIVCLVLLRF) form a helical membrane-spanning segment. Residues 471–472 (DK) are Lumenal-facing. A helical membrane pass occupies residues 473–493 (AAIFNHLTTLQLLTLCTLSGV). Residues 494–519 (LEGNSVLNDNILIPAFMMICEKLITL) are Cytoplasmic-facing.

Belongs to the polyprenol kinase family.

It is found in the endoplasmic reticulum membrane. The catalysed reaction is a di-trans,poly-cis-dolichol + CTP = a di-trans,poly-cis-dolichyl phosphate + CDP + H(+). It participates in protein modification; protein glycosylation. Functionally, catalyzes CTP-mediated phosphorylation of dolichol, the terminal step in de novo dolichyl monophosphate (Dol-P) biosynthesis. Dol-P is a lipid carrier essential for the synthesis of N-linked and O-linked oligosaccharides and for GPI anchors. In Saccharomyces cerevisiae (strain ATCC 204508 / S288c) (Baker's yeast), this protein is Dolichol kinase (SEC59).